A 433-amino-acid polypeptide reads, in one-letter code: Oxidoreductase acuF (433 aa).

Its pathway is secondary metabolite biosynthesis. In terms of biological role, oxidoreductase; part of the gene cluster that mediates the biosynthesis of aculins. The pathway begins with the synthesis of 6-methylsalicylic acid by the polyketide synthase (PKS) acuA via condensation of acetate and malonate units. The 6-methylsalicylic acid decarboxylase acuB then catalyzes the decarboxylation of 6-methylsalicylic acid to yield m-cresol (also known as 3-methylphenol). These first reactions occur in the cytosol. The intermediate m-cresol is then transported into the endoplasmic reticulum where the cytochrome P450 monooxygenase acuC converts it to m-hydroxybenzyl alcohol, which is further converted to gentisyl alcohol by the cytochrome P450 monooxygenase acuD. Gentisyl alcohol is further oxidized by the oxidoreductase acuE that probably catalyzes hydroxylation of the aromatic ring. The aromatic system might then be opened by oxidation through a Baeyer-Villiger type of oxidation, which could be catalyzed by acuF, with the carboxylic acid at C-1 subsequently reduced to an aldehyde by acuG. Subsequently, a hemiacetal is formed, before the dehydrogenase acuH would reduce the double bond between C-4 and C-6. Finally, keto-enol tautomerism results in formation of aculinic acid, which exists as two diastereomers (both R/S configurations at C-1) by non-enzymatic hemiacetal formation. The carboxypeptidase acuI could be involved in the linking of aculinic acid to an aculene A moiety produced by the aculene biosynthesis cluster and which leads to the production of aculin A. AcuI may also be involved in the attachment of proline to aculinic acid to form epi-aculins A and B. This is Oxidoreductase acuF from Aspergillus aculeatus (strain ATCC 16872 / CBS 172.66 / WB 5094).